A 767-amino-acid polypeptide reads, in one-letter code: 5-methyltetrahydropteroyltriglutamate--homocysteine methyltransferase (767 aa).

Residues 17–20 (RELK) and K117 each bind 5-methyltetrahydropteroyltri-L-glutamate. L-homocysteine-binding positions include 441 to 443 (IGS) and E494. Residues 441–443 (IGS) and E494 contribute to the L-methionine site. 5-methyltetrahydropteroyltri-L-glutamate-binding positions include 525-526 (RC) and W571. D609 contacts L-homocysteine. L-methionine is bound at residue D609. E615 contributes to the 5-methyltetrahydropteroyltri-L-glutamate binding site. H652, C654, and E676 together coordinate Zn(2+). Residue H705 is the Proton donor of the active site. Position 737 (C737) interacts with Zn(2+).

This sequence belongs to the vitamin-B12 independent methionine synthase family. Zn(2+) serves as cofactor.

The enzyme catalyses 5-methyltetrahydropteroyltri-L-glutamate + L-homocysteine = tetrahydropteroyltri-L-glutamate + L-methionine. The protein operates within amino-acid biosynthesis; L-methionine biosynthesis via de novo pathway; L-methionine from L-homocysteine (MetE route): step 1/1. In terms of biological role, catalyzes the transfer of a methyl group from 5-methyltetrahydrofolate to homocysteine resulting in methionine formation. The sequence is that of 5-methyltetrahydropteroyltriglutamate--homocysteine methyltransferase from Bifidobacterium longum subsp. infantis (strain ATCC 15697 / DSM 20088 / JCM 1222 / NCTC 11817 / S12).